A 101-amino-acid polypeptide reads, in one-letter code: Small ribosomal subunit protein uS14 (101 aa).

Positions 1-10 (MAKNSMVERD) are enriched in basic and acidic residues. The disordered stretch occupies residues 1–20 (MAKNSMVERDRKRRKLAQKY).

Belongs to the universal ribosomal protein uS14 family. In terms of assembly, part of the 30S ribosomal subunit. Contacts proteins S3 and S10.

Functionally, binds 16S rRNA, required for the assembly of 30S particles and may also be responsible for determining the conformation of the 16S rRNA at the A site. This is Small ribosomal subunit protein uS14 from Halorhodospira halophila (strain DSM 244 / SL1) (Ectothiorhodospira halophila (strain DSM 244 / SL1)).